Reading from the N-terminus, the 521-residue chain is Calcium-dependent protein kinase 33 (521 aa).

G2 is lipidated: N-myristoyl glycine. Residues P15–S56 are disordered. Basic and acidic residues predominate over residues R21–P36. One can recognise a Protein kinase domain in the interval Y73–L331. ATP contacts are provided by residues L79–T87 and K102. The Proton acceptor role is filled by D197. S237 bears the Phosphoserine mark. Residues A337 to I367 are autoinhibitory domain. EF-hand domains lie at E374–R409, L410–L445, E446–G481, and D482–Q516. Ca(2+)-binding residues include D387, D389, S391, T393, E398, D423, D425, N427, S429, E434, D459, D461, S463, Y465, E470, D494, D496, D498, R500, and E505.

It belongs to the protein kinase superfamily. Ser/Thr protein kinase family. CDPK subfamily. In terms of assembly, interacts with THI1. Interacts with FD and FDP. Autophosphorylated. In terms of tissue distribution, expressed in primary roots, leaves, inflorescences, siliques and guard cells. Expressed in the shoot apical meristem.

The protein localises to the cell membrane. It is found in the nucleus. Its subcellular location is the cytoplasm. It catalyses the reaction L-seryl-[protein] + ATP = O-phospho-L-seryl-[protein] + ADP + H(+). The catalysed reaction is L-threonyl-[protein] + ATP = O-phospho-L-threonyl-[protein] + ADP + H(+). Activated by calcium. Autophosphorylation may play an important role in the regulation of the kinase activity. Repressed by THI1 through a negative regulation of the autophosphorylation activity in the presence of Ca(2+). Ca(2+)-dependent protein kinase. Negative regulator of stomatal closure and slow anion currents. Unable to phosphorylate THI1 in vitro, but the kinase activity is essential for the stomatal closure regulation. Phosphorylates FD. May play a role in signal transduction pathways that involve calcium as a second messenger. This Arabidopsis thaliana (Mouse-ear cress) protein is Calcium-dependent protein kinase 33.